Reading from the N-terminus, the 920-residue chain is 2-oxoglutarate dehydrogenase E1 component (920 aa).

This sequence belongs to the alpha-ketoglutarate dehydrogenase family. As to quaternary structure, homodimer. Part of the 2-oxoglutarate dehydrogenase (OGDH) complex composed of E1 (2-oxoglutarate dehydrogenase), E2 (dihydrolipoamide succinyltransferase) and E3 (dihydrolipoamide dehydrogenase); the complex contains multiple copies of the three enzymatic components (E1, E2 and E3). Requires thiamine diphosphate as cofactor.

The enzyme catalyses N(6)-[(R)-lipoyl]-L-lysyl-[protein] + 2-oxoglutarate + H(+) = N(6)-[(R)-S(8)-succinyldihydrolipoyl]-L-lysyl-[protein] + CO2. Functionally, E1 component of the 2-oxoglutarate dehydrogenase (OGDH) complex which catalyzes the decarboxylation of 2-oxoglutarate, the first step in the conversion of 2-oxoglutarate to succinyl-CoA and CO(2). In Leptospira interrogans serogroup Icterohaemorrhagiae serovar copenhageni (strain Fiocruz L1-130), this protein is 2-oxoglutarate dehydrogenase E1 component.